The following is a 473-amino-acid chain: 23S rRNA (uracil(1939)-C(5))-methyltransferase RlmD (473 aa).

The tract at residues K6–E27 is disordered. A compositionally biased stretch (basic residues) spans S8–V20. The 58-residue stretch at D42–K99 folds into the TRAM domain. [4Fe-4S] cluster contacts are provided by C112, C118, C121, and C199. 6 residues coordinate S-adenosyl-L-methionine: Q304, F333, N338, E354, D381, and D402. C428 acts as the Nucleophile in catalysis.

This sequence belongs to the class I-like SAM-binding methyltransferase superfamily. RNA M5U methyltransferase family. RlmD subfamily.

The catalysed reaction is uridine(1939) in 23S rRNA + S-adenosyl-L-methionine = 5-methyluridine(1939) in 23S rRNA + S-adenosyl-L-homocysteine + H(+). Functionally, catalyzes the formation of 5-methyl-uridine at position 1939 (m5U1939) in 23S rRNA. The protein is 23S rRNA (uracil(1939)-C(5))-methyltransferase RlmD of Alteromonas naphthalenivorans.